The sequence spans 109 residues: UPF0060 membrane protein RC1_3291 (109 aa).

Helical transmembrane passes span 4–24 (IATY…FWAW), 31–51 (PLWL…LTRI), 59–79 (AYAA…WLVE), and 88–108 (TLGT…PRGG).

Belongs to the UPF0060 family.

The protein localises to the cell inner membrane. In Rhodospirillum centenum (strain ATCC 51521 / SW), this protein is UPF0060 membrane protein RC1_3291.